Reading from the N-terminus, the 183-residue chain is Adenine phosphoribosyltransferase (183 aa).

It belongs to the purine/pyrimidine phosphoribosyltransferase family. Homodimer.

The protein localises to the cytoplasm. It carries out the reaction AMP + diphosphate = 5-phospho-alpha-D-ribose 1-diphosphate + adenine. Its pathway is purine metabolism; AMP biosynthesis via salvage pathway; AMP from adenine: step 1/1. In terms of biological role, catalyzes a salvage reaction resulting in the formation of AMP, that is energically less costly than de novo synthesis. In Klebsiella pneumoniae (strain 342), this protein is Adenine phosphoribosyltransferase.